The chain runs to 1358 residues: MPNDNKTPNRSSTPKFTKKPVTPNDKIPEREEKSNEVKTPKIPLFTFAKSKNYSRPSTAIHTSPHQPSDVKPTSHKQLQQPKSSPLKKNNYNSFPHSNLEKISNSKLLSLLRSKTSAGRIESNNPSHDASRSLASFEQTAFSRHAQQQTSTFNSKPVRTIVPISTSQTNNSFLSGVKSLLSEEKIRDYSKEILGINLANEQPVLEKPLKKGSADIGASVISLTKDKSIRKDTVEEKKEEKLNIGKNFAHSDSLSVPKVSAGDSGISPEESKARSPGIAKPNAIQTEVYGINEESTNERLEINQEKPVKLDENSANSTVASALDTNGTSATTETLTSKKIVPSPKKVAIDQDKITLHDEKTLAPSKHQPITSEQKMKEDADLKRMEILKSPHLSKSPADRPQGRRNSRNFSTRDEETTKLAFLVEYEGQENNYNSTSRSTEKKNDMNTSAKNKNGENKKIGKRPPEIMSTEAHVNKVTEETTKQIQSVRIDGRKVLQKVQGESHIDSRNNTLNVTPSKRPQLGEIPNPMKKHKPNEGRTPNISNGTINIQKKLEPKEIVRDILHTKESSNEAKKTIQNPLNKSQNTALPSTHKVTQKKDIKIGTNDLFQVESAPKISSEIDRENVKSKDEPVSKAVESKSLLNLFSNVLKAPFIKSESKPFSSDALSKEKANFLETIASTEKPENKTDKVSLSQPVSASKHEYSDNFPVSLSQPSKKSFANHTEDEQIEKKKICRGRMNTIITHPGKMELVYVSDSDDSSSDNDSLTDLESLSSGESNEIKVTNDLDTSAEKDQIQAGKWFDPVLDWRKSDRELTKNILWRIADKTTYDKETITDLIEQGIPKHSYLSGNPLTSVTNDICSVENYETSSAFFYQQVHKKDRLQYLPLYAVSTFENTNNTEKNDVTNKNINIGKHSQEQNSSSAKPSQIPTVSSPLGFEETKLSTTPTKSNRRVSHSDTNSSKPKNTKENLSKSSWRQEWLANLKLISVSLVDEFPSELSDSDRQIINEKMQLLKDIFANNLKSAISNNFRESDIIILKGEIEDYPMSSEIKIYYNELQNKPDAKKARFWSFMKTQRFVSNMGFDIQKSCEPVSISTSVKPHVVEPEHMADAKIMPKDILQITKKPLMVKNVKPSSPPDVKSLVQLSTMETKTLPEKKQFDSIFNSNKAKIIPGNGKHASENISLSFSRPASYGYFSVGKRVPIVEDRRVKQLDDITDSNTTEILTSVDVLGTHSQTGTQQSNMYTSTQKTELEIDNKDSVTECSKDMKEDGLSFVDIVLSKAASALDEKEKQLAVANEIIRSLSDEVMRNEIRITSLQGDLTFTKKCLENARSQISEKDAKINKLMEKDFQVNKEIKPY.

The segment covering 1 to 15 has biased composition (polar residues); the sequence is MPNDNKTPNRSSTPK. 7 disordered regions span residues 1–98, 252–277, 356–466, 498–544, 677–726, 752–787, and 913–970; these read MPND…PHSN, SLSVPKVSAGDSGISPEESKARSPGI, HDEK…PPEI, VQGE…ISNG, ASTE…EDEQ, VSDSDDSSSDNDSLTDLESLSSGESNEIKVTNDLDT, and HSQE…ENLS. A compositionally biased stretch (basic and acidic residues) spans 26–39; it reads KIPEREEKSNEVKT. Composition is skewed to polar residues over residues 49 to 66 and 75 to 96; these read KSKNYSRPSTAIHTSPHQ and HKQLQQPKSSPLKKNNYNSFPH. The segment covering 373-388 has biased composition (basic and acidic residues); that stretch reads QKMKEDADLKRMEILK. Positions 428–437 are enriched in polar residues; it reads QENNYNSTSR. Positions 452-464 are enriched in basic and acidic residues; it reads KNGENKKIGKRPP. Polar residues predominate over residues 507–517; it reads RNNTLNVTPSK. Position 692 is a phosphoserine (S692). Residues 706-720 show a composition bias toward polar residues; it reads FPVSLSQPSKKSFAN. Residues 754–766 are compositionally biased toward acidic residues; sequence DSDDSSSDNDSLT. The segment covering 777–787 has biased composition (basic and acidic residues); sequence NEIKVTNDLDT. The span at 916–932 shows a compositional bias: polar residues; that stretch reads EQNSSSAKPSQIPTVSS. K1128 is covalently cross-linked (Glycyl lysine isopeptide (Lys-Gly) (interchain with G-Cter in SUMO)). Residues 1271-1347 are a coiled coil; it reads LSFVDIVLSK…DAKINKLMEK (77 aa).

In terms of assembly, homodimer. Interacts with MPS3. Interacts with RIS1. Interacts with SIR1, SIR2 and SIR3. Interacts with YKU80. Interacts with UBP10. Interacts with RAP1 (via C-terminus).

Its subcellular location is the nucleus. Its function is as follows. The proteins SIR1 through SIR4 are required for transcriptional repression of the silent mating type loci, HML and HMR. The proteins SIR2 through SIR4 repress mulitple loci by modulating chromatin structure. Involves the compaction of chromatin fiber into a more condensed form. This Saccharomyces cerevisiae (strain ATCC 204508 / S288c) (Baker's yeast) protein is Regulatory protein SIR4 (SIR4).